The chain runs to 357 residues: MFSKLKEVESRYLELEKLLSDPTVVTRQSLYQKYAKEHADLRDLVEVFRKYEKVGAAIEEAQQLLRGDDEELKEIAREELPELRQHLAGLEERLKVLLLPRDLNDDRNVFLEIRAGTGGDEAGLFVGDLFRMYARYAEMRRWKVEVISSTPSSGVGGFKEIIASIAGQGAYSQLKYESGVHRVQRVPVTEAQGRIHTSAVTVAIMPEADEVEVTIDPNDLRIDVFHSSGHGGQSVNTTDSAVRITHLPTGLVVSCQDEKSQLKNKAKALKVLRARLLDIMVKKQSDEISEARKSQVGSGDRSERIRTYNFPQGRVTDHRVGLTLYSLENILGGDIQEFIDALTAYFQAESLKQQSTG.

The residue at position 233 (Gln-233) is an N5-methylglutamine.

The protein belongs to the prokaryotic/mitochondrial release factor family. Post-translationally, methylated by PrmC. Methylation increases the termination efficiency of RF1.

Its subcellular location is the cytoplasm. In terms of biological role, peptide chain release factor 1 directs the termination of translation in response to the peptide chain termination codons UAG and UAA. The chain is Peptide chain release factor 1 from Syntrophus aciditrophicus (strain SB).